A 103-amino-acid polypeptide reads, in one-letter code: Thioredoxin (103 aa).

The 103-residue stretch at 1-103 (MVKEITDATF…ELDEVINKYV (103 aa)) folds into the Thioredoxin domain. A disulfide bridge connects residues Cys28 and Cys31.

Belongs to the thioredoxin family.

Functionally, component of the thioredoxin-thioredoxin reductase system. Participates in various redox reactions through the reversible oxidation of its active center dithiol to a disulfide and catalyzes dithiol-disulfide exchange reactions. This Listeria innocua serovar 6a (strain ATCC BAA-680 / CLIP 11262) protein is Thioredoxin (trxA).